The primary structure comprises 500 residues: Cytochrome P450 2D27 (500 aa).

Heme is bound at residue Cys-446.

The protein belongs to the cytochrome P450 family. It depends on heme as a cofactor. As to expression, expressed in liver, but not in kidney, small intestine, and brain.

It localises to the endoplasmic reticulum membrane. Its subcellular location is the microsome membrane. Its function is as follows. Has bufuralol 1'-hydroxylase and debrisoquine 4-hydroxylase activities. This chain is Cytochrome P450 2D27 (CYP2D27), found in Mesocricetus auratus (Golden hamster).